Here is a 373-residue protein sequence, read N- to C-terminus: Cobalt-precorrin-5B C(1)-methyltransferase (373 aa).

Belongs to the CbiD family.

The enzyme catalyses Co-precorrin-5B + S-adenosyl-L-methionine = Co-precorrin-6A + S-adenosyl-L-homocysteine. Its pathway is cofactor biosynthesis; adenosylcobalamin biosynthesis; cob(II)yrinate a,c-diamide from sirohydrochlorin (anaerobic route): step 6/10. In terms of biological role, catalyzes the methylation of C-1 in cobalt-precorrin-5B to form cobalt-precorrin-6A. This Listeria monocytogenes serotype 4a (strain HCC23) protein is Cobalt-precorrin-5B C(1)-methyltransferase.